The primary structure comprises 192 residues: Fe/S biogenesis protein NfuA (192 aa).

Positions 149 and 152 each coordinate [4Fe-4S] cluster.

The protein belongs to the NfuA family. Homodimer. It depends on [4Fe-4S] cluster as a cofactor.

Its function is as follows. Involved in iron-sulfur cluster biogenesis. Binds a 4Fe-4S cluster, can transfer this cluster to apoproteins, and thereby intervenes in the maturation of Fe/S proteins. Could also act as a scaffold/chaperone for damaged Fe/S proteins. The polypeptide is Fe/S biogenesis protein NfuA (Shewanella sp. (strain MR-7)).